A 704-amino-acid polypeptide reads, in one-letter code: PHD finger protein MALE MEIOCYTE DEATH 1 (704 aa).

Residues 606-656 form a PHD-type zinc finger; the sequence is MVKCICRARDDDGERMISCDVCEVWQHTRCCGIDDSDTLPPLFVCSNCCEE. C609, C611, C624, C627, H632, C635, C650, and C653 together coordinate Zn(2+).

Interacts with JMJ16 in the nucleus of male meiocytes, especially on pachytene chromosomes. As to expression, expressed in inflorescence, specifically in male meiocytes.

The protein resides in the nucleus. Functionally, probable transcription factor required for chromosome organization and progression during male meiosis (e.g. microsporogenesis). Necessary for fertility and meiotic progressive compaction of prophase I chromosomes to metaphase I bivalents. Together with JMJ16, promotes gene expression in male meiocytes in an H3K9me3-dependent manner, and contributes to meiotic chromosome condensation by triggering some condensin promoters (e.g. CAP-D3 and CAP-H). This is PHD finger protein MALE MEIOCYTE DEATH 1 from Arabidopsis thaliana (Mouse-ear cress).